A 178-amino-acid polypeptide reads, in one-letter code: Large ribosomal subunit protein eL20w (178 aa).

This sequence belongs to the eukaryotic ribosomal protein eL20 family.

This is Large ribosomal subunit protein eL20w (RPL18AD) from Arabidopsis thaliana (Mouse-ear cress).